Here is a 1395-residue protein sequence, read N- to C-terminus: DNA-directed RNA polymerase subunit beta' (1395 aa).

Zn(2+)-binding residues include Cys70, Cys72, Cys85, and Cys88. Mg(2+) contacts are provided by Asp460, Asp462, and Asp464. 4 residues coordinate Zn(2+): Cys814, Cys888, Cys895, and Cys898.

It belongs to the RNA polymerase beta' chain family. The RNAP catalytic core consists of 2 alpha, 1 beta, 1 beta' and 1 omega subunit. When a sigma factor is associated with the core the holoenzyme is formed, which can initiate transcription. Mg(2+) is required as a cofactor. The cofactor is Zn(2+).

The catalysed reaction is RNA(n) + a ribonucleoside 5'-triphosphate = RNA(n+1) + diphosphate. DNA-dependent RNA polymerase catalyzes the transcription of DNA into RNA using the four ribonucleoside triphosphates as substrates. The chain is DNA-directed RNA polymerase subunit beta' from Pseudoalteromonas atlantica (strain T6c / ATCC BAA-1087).